Consider the following 415-residue polypeptide: Gamma-glutamyl phosphate reductase (415 aa).

It belongs to the gamma-glutamyl phosphate reductase family.

It localises to the cytoplasm. The catalysed reaction is L-glutamate 5-semialdehyde + phosphate + NADP(+) = L-glutamyl 5-phosphate + NADPH + H(+). Its pathway is amino-acid biosynthesis; L-proline biosynthesis; L-glutamate 5-semialdehyde from L-glutamate: step 2/2. In terms of biological role, catalyzes the NADPH-dependent reduction of L-glutamate 5-phosphate into L-glutamate 5-semialdehyde and phosphate. The product spontaneously undergoes cyclization to form 1-pyrroline-5-carboxylate. The protein is Gamma-glutamyl phosphate reductase of Pseudoalteromonas translucida (strain TAC 125).